Consider the following 515-residue polypeptide: Maturase K (515 aa).

It belongs to the intron maturase 2 family. MatK subfamily.

Its subcellular location is the plastid. The protein resides in the chloroplast. In terms of biological role, usually encoded in the trnK tRNA gene intron. Probably assists in splicing its own and other chloroplast group II introns. This is Maturase K from Ceratophyllum demersum (Rigid hornwort).